A 49-amino-acid polypeptide reads, in one-letter code: MAQKKVALACTVCGSRNYTIDANPNRTDRLEVKKFCKYCGKHTLHRETR.

It belongs to the bacterial ribosomal protein bL33 family.

This is Large ribosomal subunit protein bL33 from Lactiplantibacillus plantarum (strain ATCC BAA-793 / NCIMB 8826 / WCFS1) (Lactobacillus plantarum).